The sequence spans 193 residues: Xanthine phosphoribosyltransferase (193 aa).

Xanthine-binding residues include Leu20 and Thr27. 128–132 (ANGQA) provides a ligand contact to 5-phospho-alpha-D-ribose 1-diphosphate. Position 156 (Lys156) interacts with xanthine.

This sequence belongs to the purine/pyrimidine phosphoribosyltransferase family. Xpt subfamily. In terms of assembly, homodimer.

Its subcellular location is the cytoplasm. It catalyses the reaction XMP + diphosphate = xanthine + 5-phospho-alpha-D-ribose 1-diphosphate. The protein operates within purine metabolism; XMP biosynthesis via salvage pathway; XMP from xanthine: step 1/1. Functionally, converts the preformed base xanthine, a product of nucleic acid breakdown, to xanthosine 5'-monophosphate (XMP), so it can be reused for RNA or DNA synthesis. This chain is Xanthine phosphoribosyltransferase, found in Streptococcus equi subsp. zooepidemicus (strain H70).